The primary structure comprises 481 residues: Polygalacturonase QRT3 (481 aa).

The signal sequence occupies residues 1–27 (MELRKSQVAMPVFLAIMSLMVSQVVFA). PbH1 repeat units follow at residues 203–226 (SLRTSIDNCYITRFGDTNGILVKS), 261–282 (GNDNAVTDTVIFSARIGVMVSG), and 356–377 (IRGVSIVDNMFSGSGHGVQIVQ). N-linked (GlcNAc...) asparagine glycosylation is found at Asn415 and Asn455.

It belongs to the glycosyl hydrolase 28 family. In terms of tissue distribution, expressed in the tapetum cells in the anthers and in the ovules of open flowers.

The protein resides in the secreted. It is found in the cell wall. It carries out the reaction (1,4-alpha-D-galacturonosyl)n+m + H2O = (1,4-alpha-D-galacturonosyl)n + (1,4-alpha-D-galacturonosyl)m.. In terms of biological role, polygalacturonase required for degrading the pollen mother cell wall during microspore development. The polypeptide is Polygalacturonase QRT3 (QRT3) (Arabidopsis thaliana (Mouse-ear cress)).